Here is a 1235-residue protein sequence, read N- to C-terminus: Insulin receptor substrate 1 (1235 aa).

Ser3 carries the post-translational modification Phosphoserine. The interval 3 to 133 (SPPDTDGFSD…AGGGCGGSCS (131 aa)) is mediates interaction with PHIP. One can recognise a PH domain in the interval 12–115 (DVRKVGYLRK…WYQALLQLHN (104 aa)). Ser99 carries the post-translational modification Phosphoserine; by CK2. The IRS-type PTB domain maps to 155–259 (FKEVWQVILK…EAMRAMSDEF (105 aa)). The disordered stretch occupies residues 258–425 (EFRPRTKSQS…SDGGFISSDE (168 aa)). Residues Ser265 and Ser302 each carry the phosphoserine; by RPS6KB1 modification. Residues 265-276 (SQSSSSCSNPIS) show a composition bias toward low complexity. Phosphoserine; by IKKB, MAPK8 and RPS6KB1 is present on Ser307. A phosphoserine mark is found at Ser318, Ser325, Ser340, and Ser343. Positions 349-358 (THAHRHRGSS) are enriched in basic residues. 2 stretches are compositionally biased toward low complexity: residues 378–399 (SPSA…GSTS) and 407–419 (SSAS…SDGG). Ser414 carries the phosphoserine modification. 2 positions are modified to phosphothreonine: Thr441 and Thr448. Phosphotyrosine; by INSR is present on Tyr460. The YXXM motif 1 signature appears at 460–463 (YICM). The residue at position 502 (Thr502) is a Phosphothreonine; by CK2. The disordered stretch occupies residues 520–539 (THSAGTSPTISHQKTPSQSS). Ser522 is modified (phosphoserine; by RPS6KB1). Polar residues predominate over residues 522–539 (SAGTSPTISHQKTPSQSS). Short sequence motifs (YXXM motif) lie at residues 546–549 (YTEM) and 608–611 (YMPM). Phosphotyrosine; by INSR is present on Tyr608. A Phosphoserine modification is found at Ser612. Tyr628 bears the Phosphotyrosine; by INSR mark. Positions 628-631 (YMPM) match the YXXM motif 4 motif. Phosphoserine; by RPS6KB1 and ROCK2 is present on Ser632. Position 658 is a phosphotyrosine (Tyr658). The YXXM motif 5 motif lies at 658–661 (YMMM). A compositionally biased stretch (low complexity) spans 669–689 (PDIGGGSCSSSSISAAPSGSS). The disordered stretch occupies residues 669-720 (PDIGGGSCSSSSISAAPSGSSYGKPWTNGVGGHHTHALPHAKPPVESGGGKL). The YXXM motif 6 motif lies at 727–730 (YMNM). The disordered stretch occupies residues 766–921 (FKHTQRPGEP…ATSRSSPSVR (156 aa)). A compositionally biased stretch (basic and acidic residues) spans 771–780 (RPGEPEEGAR). Low complexity-rich tracts occupy residues 785 to 794 (RLSSSSGRLR), 801 to 810 (DSSSSTSSDS), and 872 to 881 (QQQQQQQQQQ). Position 789 is a phosphoserine; by AMPK and SIK2 (Ser789). Ser891 bears the Phosphoserine mark. A phosphotyrosine; by INSR mark is found at Tyr895, Tyr939, and Tyr987. A GRB2-binding region spans residues 895-897 (YVN). 3 consecutive short sequence motifs (YXXM motif) follow at residues 939–942 (YMNM), 987–990 (YMTM), and 1010–1013 (YADM). Residues 1024–1165 (LPRTTGAAPP…SAPGCGAAGG (142 aa)) form a disordered region. A compositionally biased stretch (low complexity) spans 1025–1046 (PRTTGAAPPPSSTASASASVTP). Positions 1072–1084 (TRVNLSPNHNQSA) are enriched in polar residues. Position 1099 is a phosphoserine (Ser1099). Residue Ser1100 is modified to Phosphoserine; by RPS6KB1. The segment covering 1101-1114 (ETFSAPTRAANTVS) has biased composition (polar residues). Gly residues predominate over residues 1118–1128 (GAAGGGSGGGS). The residue at position 1172 (Tyr1172) is a Phosphotyrosine; by INSR. Positions 1177–1235 (LVKDVKQHPQDCPSQQQSLPPPPPHQPLGSNEGSSPRRSSEDLSTYASINFQKQPEDRQ) are disordered. A Glycyl lysine isopeptide (Lys-Gly) (interchain with G-Cter in ubiquitin) cross-link involves residue Lys1179. Residues 1204 to 1229 (LGSNEGSSPRRSSEDLSTYASINFQK) show a composition bias toward polar residues. Position 1222 is a phosphotyrosine; by INSR (Tyr1222).

Interacts with SOCS7. Interacts (via IRS-type PTB domain) with IGF1R and INSR (via the tyrosine-phosphorylated NPXY motif). Interacts with UBTF, FER and PIK3CA. Interacts (via phosphorylated YXXM motifs) with PIK3R1. Interacts with ROCK1. Interacts (via PH domain) with PHIP. Interacts with GRB2. Interacts with ALK. Interacts with EIF2AK2/PKR. Interacts with GKAP1. Interacts with DGKZ in the absence of insulin; insulin stimulation decreases this interaction. Found in a ternary complex with DGKZ and PIP5K1A in the absence of insulin stimulation. Interacts with SQSTM1; the interaction is disrupted by the presence of tensin TNS2. Interacts with NCK1 (via SH2 domain). Interacts with NCK2 (via SH3 domain). Interacts with SH2B1; this interaction enhances leptin-induced activation of the PI3-kinase pathway. Interacts with DVL2; this interaction promotes the Wnt/beta-catenin signaling pathway. Interacts with JAK1. Post-translationally, serine phosphorylation of IRS1 is a mechanism for insulin resistance. Ser-307 phosphorylation inhibits insulin action through disruption of IRS1 interaction with the insulin receptor, and Ser-789 phosphorylation is increased in the liver of insulin-resistant rats. Phosphorylation of Tyr-895 is required for GRB2-binding. Phosphorylated by ALK. Phosphorylated at Ser-265, Ser-302, Ser-632 and Ser-1100 by RPS6KB1; phosphorylation induces accelerated degradation of IRS1. Phosphorylated on tyrosine residues in response to insulin. In skeletal muscles, dephosphorylated on Tyr-608 by TNS2 under anabolic conditions; dephosphorylation results in the proteasomal degradation of IRS1. In terms of processing, ubiquitinated by the Cul7-RING(FBXW8) complex in a mTOR-dependent manner, leading to its degradation: the Cul7-RING(FBXW8) complex recognizes and binds IRS1 previously phosphorylated by S6 kinase (RPS6KB1 or RPS6KB2). Ubiquitinated by TRAF4 through 'Lys-29' linkage; this ubiquitination regulates the interaction of IRS1 with IGFR and IRS1 tyrosine phosphorylation upon IGF1 stimulation. S-nitrosylation at by BLVRB inhibits its activity.

It localises to the cytoplasm. The protein resides in the nucleus. Functionally, signaling adapter protein that participates in the signal transduction from two prominent receptor tyrosine kinases, insulin receptor/INSR and insulin-like growth factor I receptor/IGF1R. Plays therefore an important role in development, growth, glucose homeostasis as well as lipid metabolism. Upon phosphorylation by the insulin receptor, functions as a signaling scaffold that propagates insulin action through binding to SH2 domain-containing proteins including the p85 regulatory subunit of PI3K, NCK1, NCK2, GRB2 or SHP2. Recruitment of GRB2 leads to the activation of the guanine nucleotide exchange factor SOS1 which in turn triggers the Ras/Raf/MEK/MAPK signaling cascade. Activation of the PI3K/AKT pathway is responsible for most of insulin metabolic effects in the cell, and the Ras/Raf/MEK/MAPK is involved in the regulation of gene expression and in cooperation with the PI3K pathway regulates cell growth and differentiation. Acts a positive regulator of the Wnt/beta-catenin signaling pathway through suppression of DVL2 autophagy-mediated degradation leading to cell proliferation. This Rattus norvegicus (Rat) protein is Insulin receptor substrate 1 (Irs1).